Here is a 71-residue protein sequence, read N- to C-terminus: MNNVKELSIKEMQQVTGGDQMSDGVNYGKGSSLSKGGAKCGLGIVGGLATIPSGPLGWLAGAAGVINSCMK.

Residues 1–18 (MNNVKELSIKEMQQVTGG) constitute a propeptide that is removed on maturation. A disulfide bond links C40 and C69.

The protein resides in the secreted. Functionally, has antibacterial activity. In Carnobacterium maltaromaticum (Carnobacterium piscicola), this protein is Bacteriocin carnobacteriocin-A (cbnBA).